The primary structure comprises 219 residues: Proteasome subunit beta type-9 (219 aa).

A propeptide spans 1-20 (MLRAGAPTGDLPRAGEVHTG) (removed in mature form). The active-site Nucleophile is the T21. Residues K53 and K109 each carry the N6-acetyllysine modification.

The protein belongs to the peptidase T1B family. The 26S proteasome consists of a 20S proteasome core and two 19S regulatory subunits. The 20S proteasome core is composed of 28 subunits that are arranged in four stacked rings, resulting in a barrel-shaped structure. The two end rings are each formed by seven alpha subunits, and the two central rings are each formed by seven beta subunits. The catalytic chamber with the active sites is on the inside of the barrel. Component of the immunoproteasome, where it displaces the equivalent housekeeping subunit PSMB6. Component of the spermatoproteasome, a form of the proteasome specifically found in testis. In terms of assembly, (Microbial infection) Interacts with HIV-1 TAT protein. Autocleaved. The resulting N-terminal Thr residue of the mature subunit is responsible for the nucleophile proteolytic activity.

It is found in the cytoplasm. It localises to the nucleus. It catalyses the reaction Cleavage of peptide bonds with very broad specificity.. Functionally, the proteasome is a multicatalytic proteinase complex which is characterized by its ability to cleave peptides with Arg, Phe, Tyr, Leu, and Glu adjacent to the leaving group at neutral or slightly basic pH. The proteasome has an ATP-dependent proteolytic activity. This subunit is involved in antigen processing to generate class I binding peptides. Replacement of PSMB6 by PSMB9 increases the capacity of the immunoproteasome to cleave model peptides after hydrophobic and basic residues. The chain is Proteasome subunit beta type-9 (PSMB9) from Homo sapiens (Human).